The sequence spans 101 residues: Small ribosomal subunit protein bS18c (101 aa).

Basic residues predominate over residues 1–19 (MDKSKRLFRKSKRSFRRRL). The disordered stretch occupies residues 1–23 (MDKSKRLFRKSKRSFRRRLPPIG).

Belongs to the bacterial ribosomal protein bS18 family. In terms of assembly, part of the 30S ribosomal subunit.

It localises to the plastid. Its subcellular location is the chloroplast. The polypeptide is Small ribosomal subunit protein bS18c (Liriodendron tulipifera (Tuliptree)).